A 1459-amino-acid polypeptide reads, in one-letter code: PPE family protein PPE34 (1459 aa).

This sequence belongs to the mycobacterial PPE family. In terms of assembly, interacts with human TLR2.

It localises to the cell membrane. The protein resides in the secreted. Its subcellular location is the cell wall. It is found in the cell surface. Its function is as follows. Facilitates a shift in the ensuing immunity toward the Th2 phenotype and could aid in immune evasion by mycobacteria. Interacts with human Toll-like receptor 2 (TLR2) and triggers functional maturation of human dendritic cells (DCs), leading to secretion of IL-4, IL-5 and IL-10 from CD4(+) T cells and induction of Th2 immune response. Maturation of DCs involves PI3K, ERK1/2, p38 MAPK and NF-kappa-B signaling pathways. This chain is PPE family protein PPE34, found in Mycobacterium tuberculosis (strain ATCC 25618 / H37Rv).